A 122-amino-acid polypeptide reads, in one-letter code: Large ribosomal subunit protein uL14 (122 aa).

Belongs to the universal ribosomal protein uL14 family. In terms of assembly, part of the 50S ribosomal subunit. Forms a cluster with proteins L3 and L19. In the 70S ribosome, L14 and L19 interact and together make contacts with the 16S rRNA in bridges B5 and B8.

Its function is as follows. Binds to 23S rRNA. Forms part of two intersubunit bridges in the 70S ribosome. The sequence is that of Large ribosomal subunit protein uL14 from Idiomarina loihiensis (strain ATCC BAA-735 / DSM 15497 / L2-TR).